A 116-amino-acid chain; its full sequence is Small ribosomal subunit protein uS17 (116 aa).

It belongs to the universal ribosomal protein uS17 family. Part of the 30S ribosomal subunit.

Its function is as follows. One of the primary rRNA binding proteins, it binds specifically to the 5'-end of 16S ribosomal RNA. This is Small ribosomal subunit protein uS17 from Pyrococcus horikoshii (strain ATCC 700860 / DSM 12428 / JCM 9974 / NBRC 100139 / OT-3).